Here is a 418-residue protein sequence, read N- to C-terminus: CinA-like protein (418 aa).

Belongs to the CinA family.

The protein is CinA-like protein of Cyanothece sp. (strain PCC 7425 / ATCC 29141).